The following is a 97-amino-acid chain: YcgL domain-containing protein PputGB1_4120 (97 aa).

Positions 3 to 87 (RICSIYKSPR…AEDEYIEHLP (85 aa)) constitute a YcgL domain.

The chain is YcgL domain-containing protein PputGB1_4120 from Pseudomonas putida (strain GB-1).